We begin with the raw amino-acid sequence, 890 residues long: Translation initiation factor IF-2 (890 aa).

Positions 45–304 are disordered; sequence LIDHLNQKNS…LQQGFQKPAQ (260 aa). Polar residues predominate over residues 67–81; sequence STLNIPGTGGKSKSV. Basic and acidic residues predominate over residues 92–217; sequence VKRDPQEAER…RMAEENKWTD (126 aa). Residues 252–266 show a composition bias toward basic residues; the sequence is GRGRNAKAARPKKGN. The segment covering 267–280 has biased composition (basic and acidic residues); the sequence is KHAESKADREEARA. A tr-type G domain is found at 389 to 558; sequence PRAPVVTIMG…LLQAEVLELK (170 aa). Residues 398–405 form a G1 region; it reads GHVDHGKT. 398–405 is a binding site for GTP; that stretch reads GHVDHGKT. The tract at residues 423-427 is G2; sequence GITQH. The G3 stretch occupies residues 444-447; that stretch reads DTPG. GTP-binding positions include 444 to 448 and 498 to 501; these read DTPGH and NKID. Residues 498–501 form a G4 region; sequence NKID. The tract at residues 534–536 is G5; that stretch reads SAK. Lys-808 carries the N6-acetyllysine modification.

The protein belongs to the TRAFAC class translation factor GTPase superfamily. Classic translation factor GTPase family. IF-2 subfamily.

The protein localises to the cytoplasm. Functionally, one of the essential components for the initiation of protein synthesis. Protects formylmethionyl-tRNA from spontaneous hydrolysis and promotes its binding to the 30S ribosomal subunits. Also involved in the hydrolysis of GTP during the formation of the 70S ribosomal complex. This Escherichia coli (strain 55989 / EAEC) protein is Translation initiation factor IF-2.